The chain runs to 97 residues: Large ribosomal subunit protein eL21 (97 aa).

Belongs to the eukaryotic ribosomal protein eL21 family.

The sequence is that of Large ribosomal subunit protein eL21 from Methanococcoides burtonii (strain DSM 6242 / NBRC 107633 / OCM 468 / ACE-M).